Consider the following 1159-residue polypeptide: ATP-dependent helicase/deoxyribonuclease subunit B (1159 aa).

The 401-residue stretch at 1–401 folds into the UvrD-like helicase ATP-binding domain; it reads MSIRFVYGRS…LLKNWSYESV (401 aa). ATP is bound at residue 8–15; the sequence is GRSGTGKS. The 304-residue stretch at 279-582 folds into the UvrD-like helicase C-terminal domain; sequence PYRFKGNLEL…NIGDIARIKG (304 aa). [4Fe-4S] cluster is bound by residues Cys787, Cys1106, Cys1109, and Cys1115.

The protein belongs to the helicase family. AddB/RexB type 1 subfamily. As to quaternary structure, heterodimer of AddA and AddB. Mg(2+) is required as a cofactor. It depends on [4Fe-4S] cluster as a cofactor.

The heterodimer acts as both an ATP-dependent DNA helicase and an ATP-dependent, dual-direction single-stranded exonuclease. Recognizes the chi site generating a DNA molecule suitable for the initiation of homologous recombination. The AddB subunit has 5' -&gt; 3' nuclease activity but not helicase activity. The chain is ATP-dependent helicase/deoxyribonuclease subunit B from Clostridium beijerinckii (strain ATCC 51743 / NCIMB 8052) (Clostridium acetobutylicum).